Here is a 370-residue protein sequence, read N- to C-terminus: Cytochrome b (370 aa).

4 consecutive transmembrane segments (helical) span residues 30–50 (FGSM…FLAF), 74–96 (WIFR…LHIF), 109–129 (VWMS…MGYV), and 175–195 (FFVL…GHLI). Residues His80 and His94 each coordinate heme b. Heme b-binding residues include His179 and His193. Position 198 (His198) interacts with a ubiquinone. A run of 4 helical transmembrane segments spans residues 221-240 (YIGK…VLSL), 284-304 (VLGV…ALVN), 316-336 (FLVF…QCMV), and 342-362 (VLSP…LGIF).

Belongs to the cytochrome b family. The main subunits of complex b-c1 are: cytochrome b, cytochrome c1 and the Rieske protein. Requires heme b as cofactor.

The protein localises to the mitochondrion inner membrane. Component of the ubiquinol-cytochrome c reductase complex (complex III or cytochrome b-c1 complex) that is part of the mitochondrial respiratory chain. The b-c1 complex mediates electron transfer from ubiquinol to cytochrome c. Contributes to the generation of a proton gradient across the mitochondrial membrane that is then used for ATP synthesis. In Caenorhabditis briggsae, this protein is Cytochrome b (ctb-1).